The chain runs to 291 residues: Lipoyl synthase, mitochondrial (291 aa).

Residues C45, C50, C56, C71, C75, C78, and S283 each contribute to the [4Fe-4S] cluster site. The 216-residue stretch at 57-272 folds into the Radical SAM core domain; the sequence is WGEGTATFMI…EKIGKELGFR (216 aa).

The protein belongs to the radical SAM superfamily. Lipoyl synthase family. It depends on [4Fe-4S] cluster as a cofactor.

Its subcellular location is the mitochondrion. It catalyses the reaction [[Fe-S] cluster scaffold protein carrying a second [4Fe-4S](2+) cluster] + N(6)-octanoyl-L-lysyl-[protein] + 2 oxidized [2Fe-2S]-[ferredoxin] + 2 S-adenosyl-L-methionine + 4 H(+) = [[Fe-S] cluster scaffold protein] + N(6)-[(R)-dihydrolipoyl]-L-lysyl-[protein] + 4 Fe(3+) + 2 hydrogen sulfide + 2 5'-deoxyadenosine + 2 L-methionine + 2 reduced [2Fe-2S]-[ferredoxin]. It functions in the pathway protein modification; protein lipoylation via endogenous pathway; protein N(6)-(lipoyl)lysine from octanoyl-[acyl-carrier-protein]: step 2/2. Catalyzes the radical-mediated insertion of two sulfur atoms into the C-6 and C-8 positions of the octanoyl moiety bound to the lipoyl domains of lipoate-dependent enzymes, thereby converting the octanoylated domains into lipoylated derivatives. The chain is Lipoyl synthase, mitochondrial from Nematostella vectensis (Starlet sea anemone).